The following is a 251-amino-acid chain: NADPH-dependent oxidoreductase (251 aa).

It belongs to the flavin oxidoreductase frp family. It depends on FMN as a cofactor.

Its function is as follows. Reduces FMN, organic nitro compounds and disulfide DTNB. Involved in maintenance of the cellular redox state and the disulfide stress response. The polypeptide is NADPH-dependent oxidoreductase (nfrA) (Staphylococcus epidermidis (strain ATCC 35984 / DSM 28319 / BCRC 17069 / CCUG 31568 / BM 3577 / RP62A)).